A 913-amino-acid polypeptide reads, in one-letter code: DNA mismatch repair protein MutS (913 aa).

720 to 727 serves as a coordination point for ATP; it reads GPNASGKS.

The protein belongs to the DNA mismatch repair MutS family.

This protein is involved in the repair of mismatches in DNA. It is possible that it carries out the mismatch recognition step. This protein has a weak ATPase activity. This is DNA mismatch repair protein MutS from Prochlorococcus marinus (strain MIT 9312).